The following is a 43-amino-acid chain: uncharacterized protein (43 aa).

Residues 1–37 (MIIKNNNNNNNNNNNNNNNNNNNNNNNNNNNNNNNNN) are compositionally biased toward low complexity. The interval 1-43 (MIIKNNNNNNNNNNNNNNNNNNNNNNNNNNNNNNNNNIEIIIK) is disordered.

This is an uncharacterized protein from Dictyostelium discoideum (Social amoeba).